Here is a 441-residue protein sequence, read N- to C-terminus: Argininosuccinate lyase (441 aa).

Belongs to the lyase 1 family. Argininosuccinate lyase subfamily.

The protein localises to the cytoplasm. The enzyme catalyses 2-(N(omega)-L-arginino)succinate = fumarate + L-arginine. Its pathway is amino-acid biosynthesis; L-arginine biosynthesis; L-arginine from L-ornithine and carbamoyl phosphate: step 3/3. The sequence is that of Argininosuccinate lyase from Thermoanaerobacter pseudethanolicus (strain ATCC 33223 / 39E) (Clostridium thermohydrosulfuricum).